The sequence spans 336 residues: Protein-lysine N-methyltransferase EFM3 (336 aa).

S-adenosyl-L-methionine-binding positions include Trp147, 173–175 (GTG), Asp196, Leu232, and Ala251.

The protein belongs to the class I-like SAM-binding methyltransferase superfamily. EEF2KMT family.

It localises to the cytoplasm. S-adenosyl-L-methionine-dependent protein-lysine N-methyltransferase that methylates elongation factor 2. This chain is Protein-lysine N-methyltransferase EFM3, found in Chaetomium thermophilum (strain DSM 1495 / CBS 144.50 / IMI 039719) (Thermochaetoides thermophila).